The following is a 500-amino-acid chain: Citrate lyase alpha chain (500 aa).

Oligomer with a subunit composition of (alpha,beta,gamma)6.

It localises to the cytoplasm. It catalyses the reaction citrate = oxaloacetate + acetate. The catalysed reaction is citrate + acetyl-CoA = (3S)-citryl-CoA + acetate. Represents a citrate:acetyl-ACP transferase. The sequence is that of Citrate lyase alpha chain (citF) from Haemophilus influenzae (strain ATCC 51907 / DSM 11121 / KW20 / Rd).